The following is a 115-amino-acid chain: Ig heavy chain V region PJ14 (115 aa).

Residues 1-19 (MAVLALLFCLVTFPSCILS) form the signal peptide. The region spanning 20-115 (QVQLKESGPG…TDDTARYYCA (96 aa)) is the Ig-like domain.

This chain is Ig heavy chain V region PJ14, found in Mus musculus (Mouse).